Consider the following 45-residue polypeptide: Large ribosomal subunit protein bL34 (45 aa).

The span at 1–10 (MTQRTLGGTN) shows a compositional bias: polar residues. The disordered stretch occupies residues 1–45 (MTQRTLGGTNRKQKRTSGFRARMRKSNGRKVIQARRKKGRHRLSV). Positions 11-45 (RKQKRTSGFRARMRKSNGRKVIQARRKKGRHRLSV) are enriched in basic residues.

It belongs to the bacterial ribosomal protein bL34 family.

The protein is Large ribosomal subunit protein bL34 of Crocosphaera subtropica (strain ATCC 51142 / BH68) (Cyanothece sp. (strain ATCC 51142)).